The chain runs to 60 residues: Large ribosomal subunit protein uL30 (60 aa).

Belongs to the universal ribosomal protein uL30 family. In terms of assembly, part of the 50S ribosomal subunit.

This Streptococcus suis (strain 98HAH33) protein is Large ribosomal subunit protein uL30.